Reading from the N-terminus, the 692-residue chain is MKKNSQIRAKIIELREKIEKWNHHYYQLQNPLVDDLVYDKTLRELEKLERENFFLFSLEELNQSPSQKVGSKITSKFEKVAHSSPMLSLNKAYSNEELEKWAKKAREILKTVTFFVEPKIDGIALSLFYQNGNLIKALTRGDGVFGENVLVNALKINDEFIPKKINYLEDLEVRGEIYIDNSTFASLQLETKKFKNPRNAASGILRRYKNHKPKIDAKSIKFLEEESDFRYLKSFFYTLVNPEKHKINSQFDSTNFLRNLGFQVNPFQKKCSDLKDVFNFISIIKQKRDFLNYNIDGVVVKVNEFSIYEKLGSTSKFPHSAIAFKFEDDIAKTKLLAIFATIGRTGKVTYNAKIEPVTLAGSKISSAILPNYSYIENLKLNLNTEVYIKKAGEIIPQIIGSVHNYPKTNFSIVKNCPKCNSELVNSESGLDQFCQNQFCPEIILQKIVHFCSKNALNIESLAQKRIEKFLEKGLISSACDIFYLKDKLELIYERLSNKNQLLTKQNASQSMQIKSIMKLLNEVERAKNIDFYRLIFGLGIRNVGLKAAKILSRYASNLSELRNLDFNLLKNQHDFGPVIIESLIDYFNNQKNSEQLNCLETVGFNFKTTFLTNQSNSWASFAISGKLSKPRDEYVRIIEESGASFHESLTKKTDFLLLGQSAGSKIEKAKKAGIKIINEVQFFDLIKNSKKT.

NAD(+) contacts are provided by residues 35 to 39 (DLVYD), 88 to 89 (SL), and E117. K119 (N6-AMP-lysine intermediate) is an active-site residue. R140, E176, K301, and K325 together coordinate NAD(+). C416, C419, C434, and C439 together coordinate Zn(2+). A BRCT domain is found at 611-692 (LTNQSNSWAS…FDLIKNSKKT (82 aa)).

Belongs to the NAD-dependent DNA ligase family. LigA subfamily. The cofactor is Mg(2+). Requires Mn(2+) as cofactor.

The enzyme catalyses NAD(+) + (deoxyribonucleotide)n-3'-hydroxyl + 5'-phospho-(deoxyribonucleotide)m = (deoxyribonucleotide)n+m + AMP + beta-nicotinamide D-nucleotide.. DNA ligase that catalyzes the formation of phosphodiester linkages between 5'-phosphoryl and 3'-hydroxyl groups in double-stranded DNA using NAD as a coenzyme and as the energy source for the reaction. It is essential for DNA replication and repair of damaged DNA. The protein is DNA ligase of Mesomycoplasma hyopneumoniae (strain 232) (Mycoplasma hyopneumoniae).